A 330-amino-acid polypeptide reads, in one-letter code: Aspartate--ammonia ligase (330 aa).

It belongs to the class-II aminoacyl-tRNA synthetase family. AsnA subfamily.

The protein localises to the cytoplasm. The enzyme catalyses L-aspartate + NH4(+) + ATP = L-asparagine + AMP + diphosphate + H(+). It participates in amino-acid biosynthesis; L-asparagine biosynthesis; L-asparagine from L-aspartate (ammonia route): step 1/1. The chain is Aspartate--ammonia ligase from Yersinia enterocolitica serotype O:8 / biotype 1B (strain NCTC 13174 / 8081).